We begin with the raw amino-acid sequence, 263 residues long: Glutamate/glutamine/aspartate/asparagine transport ATP-binding protein BztD (263 aa).

The ABC transporter domain occupies Ile-23 to Leu-257. Gly-55–Ser-62 serves as a coordination point for ATP.

This sequence belongs to the ABC transporter superfamily. As to quaternary structure, bztB and BztC form a heterodimer which can form a membrane complex with a homodimer of BztD.

The protein localises to the cell membrane. Functionally, part of a binding-protein-dependent transport system for glutamate, glutamine, aspartate, asparagine. Probably responsible for energy coupling to the transport system. The chain is Glutamate/glutamine/aspartate/asparagine transport ATP-binding protein BztD (bztD) from Rhodobacter capsulatus (strain ATCC BAA-309 / NBRC 16581 / SB1003).